A 450-amino-acid polypeptide reads, in one-letter code: SAGA complex/transcription factor TFIID complex subunit Taf12 (450 aa).

Polar residues-rich tracts occupy residues 1–10, 19–29, and 190–212; these read MNGQHSSPGT, PVNQAQFSQQR, and QNRQASSANGNNTGTSTPVNAST. Disordered stretches follow at residues 1 to 29 and 190 to 281; these read MNGQHSSPGTPVQRPSAGPVNQAQFSQQR and QNRQ…VEKS. Over residues 217 to 236 the composition is skewed to low complexity; it reads STASTPQLQQTQAQANAPQQ. Polar residues-rich tracts occupy residues 237–246 and 255–281; these read RINPETSSVP and ANVSNESTELATSATQQSGLANNVEKS. Phosphoserine is present on S297. The Histone-fold domain occupies 338-413; it reads NGNRLLSKRK…HLERNWNIRL (76 aa). The segment at 426–450 is disordered; sequence RKTGPTPSYQQKQNAIGTAKSLNKD. Residues 430–441 are compositionally biased toward polar residues; that stretch reads PTPSYQQKQNAI.

Belongs to the TAF12 family. As to quaternary structure, component of the 1.8 MDa SAGA (Spt-Ada-Gcn5 acetyltransferase) complex, which is composed of 19 subunits tra1, spt7, taf5, ngg1/ada3, sgf73, spt20, spt8, taf12, taf6, hfi1/ada1, ubp8, gcn5, ada2, spt3, sgf29, taf10, taf9, sgf11 and sus1. The SAGA complex is composed of 4 modules, namely the HAT (histone acetyltransferase) module (gcn5, ada2, ngg1/ada3 and sgf29), the DUB (deubiquitinating) module (ubp8, sgf11, sgf73 and sus1), the core or TAF (TBP-associated factor) module (taf5, taf6, taf9, taf10 and taf12), and the Tra1 or SPT (Suppressor of Ty) module (tra1, hfi1/ada1, spt3, spt7, spt8 and spt20). The Tra1/SPT module binds activators, the core module recruits TBP (TATA-binding protein), the HAT module contains the histone H3 acetyltransferase gcn5, and the DUB module comprises the histone H2B deubiquitinase ubp8. Component of the 1.2 MDa TFIID complex, which is composed of TATA-binding protein (TBP) and the 14 TBP-associated factors (TAFs). It comprises 1 copy of each taf1, taf2, taf3, taf7, taf8, taf11, taf13, 2 copies of each taf4, taf5, taf6, taf9, taf10, taf12, and 3 copies of taf14. In TFIID, taf12 heterodimerizes with taf4, forming ultimately an octamer consisting of a taf6-taf9 heterotetramer core flanked by taf4-taf12 dimers on either side, similar to the histone H2A-H2B-H3-H4 octamer.

The protein resides in the nucleus. Functions as a component of both the DNA-binding general transcription initiation factor complex TFIID and the transcription coactivator SAGA complex. Binding of TFIID to a promoter (with or without TATA element) is the initial step in pre-initiation complex (PIC) formation. TFIID plays a key role in the regulation of gene expression by RNA polymerase II through different activities such as transcription activator interaction, core promoter recognition and selectivity, TFIIA and TFIIB interaction, chromatin modification (histone acetylation by TAF1), facilitation of DNA opening and initiation of transcription. SAGA acts as a general cofactor required for essentially all RNA polymerase II transcription. At the promoters, SAGA is required for transcription pre-initiation complex (PIC) recruitment. It influences RNA polymerase II transcriptional activity through different activities such as TBP interaction (via core/TAF module) and promoter selectivity, interaction with transcription activators (via Tra1/SPT module), and chromatin modification through histone acetylation (via HAT module) and deubiquitination (via DUB module). SAGA preferentially acetylates histones H3 (to form H3K9ac, H3K14ac, H3K18ac and H3K23ac) and H2B and deubiquitinates histone H2B. SAGA interacts with DNA via upstream activating sequences (UASs). This is SAGA complex/transcription factor TFIID complex subunit Taf12 from Schizosaccharomyces pombe (strain 972 / ATCC 24843) (Fission yeast).